We begin with the raw amino-acid sequence, 33 residues long: Cytochrome b6-f complex subunit 8 (33 aa).

A helical transmembrane segment spans residues leucine 2–valine 22.

It belongs to the PetN family. As to quaternary structure, the 4 large subunits of the cytochrome b6-f complex are cytochrome b6, subunit IV (17 kDa polypeptide, PetD), cytochrome f and the Rieske protein, while the 4 small subunits are PetG, PetL, PetM and PetN. The complex functions as a dimer.

It is found in the cellular thylakoid membrane. Functionally, component of the cytochrome b6-f complex, which mediates electron transfer between photosystem II (PSII) and photosystem I (PSI), cyclic electron flow around PSI, and state transitions. The chain is Cytochrome b6-f complex subunit 8 from Prochlorococcus marinus (strain SARG / CCMP1375 / SS120).